Here is an 82-residue protein sequence, read N- to C-terminus: Small ribosomal subunit protein eS21 (82 aa).

It belongs to the eukaryotic ribosomal protein eS21 family.

The sequence is that of Small ribosomal subunit protein eS21 (RPS21) from Cyanophora paradoxa.